A 446-amino-acid polypeptide reads, in one-letter code: MSANSGVKRASKAFKTCLFCKRSHVVCDKQRPCSRCVKRDIAHLCREDDIAVPNEMPSQHESSPNDNNIQGKYANKAHTGIPSDYQNEPVNKSGSTYGEELSPKLDSSLVNDTTSLLLPQQPVFVSENVGSEFSSLNEFLSMLENPLLTQTSLSSSSASNVHLENGSQTTQSPLEYQNDNRRDEIGVARQENRSPTIMSGSSNSISKGDKQDQEKEESRILANANENSAPTPKEQFFLTAADPSTEMTPEHRLKLVINAKLEAGLLKPYNYAKGYARLQDYMDKYMNQSSKQRILKPLSTIRPAFRTIARSLKDVDLVLVEESFERMLLSYDRVFTSMSMPACLCRRTGEIYRANKEFASLVDCTVDDLRDGKLAIYELMTEESAVNFWEKYGSIAFDKGQKAVLTSCSLRTKDGIRKRPCCFSFTIRRDRYNIPICIVGNFIPLS.

The zn(2)-C6 fungal-type DNA-binding region spans 15–45; sequence KTCLFCKRSHVVCDKQRPCSRCVKRDIAHLC. Disordered stretches follow at residues 52–106 and 158–218; these read VPNE…PKLD and ASNV…KEES. 2 stretches are compositionally biased toward polar residues: residues 56–70 and 84–96; these read MPSQ…NNIQ and DYQN…SGST. Position 102 is a phosphoserine (serine 102). The span at 160-177 shows a compositional bias: polar residues; the sequence is NVHLENGSQTTQSPLEYQ. Residues 178–192 show a composition bias toward basic and acidic residues; that stretch reads NDNRRDEIGVARQEN. A compositionally biased stretch (polar residues) spans 193 to 206; sequence RSPTIMSGSSNSIS. Basic and acidic residues predominate over residues 207–218; sequence KGDKQDQEKEES. Phosphothreonine is present on threonine 231.

Phosphorylated by SNF1 in absence of glucose. The phosphorylation is required for induction of transcription of gluconeogenic genes.

It localises to the cytoplasm. It is found in the nucleus. In terms of biological role, transcription factor which regulates the expression of genes for gluconeogenesis, the TCA cycle, and glucose metabolism. Involved in the cell wall remodeling process and drug resistance. The protein is Regulator of drug sensitivity 2 (RDS2) of Saccharomyces cerevisiae (strain ATCC 204508 / S288c) (Baker's yeast).